A 703-amino-acid chain; its full sequence is DNA ligase (703 aa).

The tract at residues 1 to 20 (MNDNLDLFSGAAPAAPESGA) is disordered. Low complexity predominate over residues 9–20 (SGAAPAAPESGA). Residues 53 to 57 (DGEYD), 102 to 103 (SI), and glutamate 139 contribute to the NAD(+) site. Residue lysine 141 is the N6-AMP-lysine intermediate of the active site. NAD(+)-binding residues include arginine 162, glutamate 200, lysine 321, and lysine 345. Zn(2+) is bound by residues cysteine 439, cysteine 442, cysteine 457, and cysteine 463. In terms of domain architecture, BRCT spans 622-703 (QTAQPLAGMT…MLALLAGGDR (82 aa)).

The protein belongs to the NAD-dependent DNA ligase family. LigA subfamily. Mg(2+) serves as cofactor. Mn(2+) is required as a cofactor.

The enzyme catalyses NAD(+) + (deoxyribonucleotide)n-3'-hydroxyl + 5'-phospho-(deoxyribonucleotide)m = (deoxyribonucleotide)n+m + AMP + beta-nicotinamide D-nucleotide.. Its function is as follows. DNA ligase that catalyzes the formation of phosphodiester linkages between 5'-phosphoryl and 3'-hydroxyl groups in double-stranded DNA using NAD as a coenzyme and as the energy source for the reaction. It is essential for DNA replication and repair of damaged DNA. This is DNA ligase from Delftia acidovorans (strain DSM 14801 / SPH-1).